A 644-amino-acid polypeptide reads, in one-letter code: G-protein coupled receptor-associated protein LMBRD2 (644 aa).

Topologically, residues 1–4 (MGTV) are extracellular. The helical transmembrane segment at 5–27 (SLAVQLFIVFLLTSYLLNKYSTI) threads the bilayer. The Cytoplasmic portion of the chain corresponds to 28-31 (RKQN). The chain crosses the membrane as a helical span at residues 32–52 (PIVTISTFIGWYFSLIIVFVL). Residues 53–102 (PLDVAITFFHKCENDRQRVLNTTSTPAPIVPECELPGGYVPDDVLFDLWR) lie on the Extracellular side of the membrane. Asn73 carries N-linked (GlcNAc...) asparagine glycosylation. A helical transmembrane segment spans residues 103–123 (VVYWSAQILTWLILPLLQSYV). Residues 124-145 (TAGNFTIFGKIRAAVINNTVYY) lie on the Cytoplasmic side of the membrane. Residues 146–166 (AIYSLCFLAILIYAMFKGVSI) form a helical membrane-spanning segment. The Extracellular portion of the chain corresponds to 167 to 172 (NIENLK). A helical membrane pass occupies residues 173–193 (VILVSASNTWGLFLLVVLLGH). Residues 194 to 369 (GLVELPRSLW…RLQTPFCRVL (176 aa)) are Cytoplasmic-facing. The stretch at 216–245 (YFDIEKLASEKSEAEENVKEIYKKVRVLFN) forms a coiled coil. A helical membrane pass occupies residues 370–390 (GVVTVFMTFFVLFSECTFFVV). The Extracellular portion of the chain corresponds to 391–412 (SYTVSPAAFVTEYASNRFHYKY). Residues 413-433 (TQFVAFGIIVYLITCAYFTIF) traverse the membrane as a helical segment. Topologically, residues 434-453 (RLQIYKYYHLDPNGHTDENS) are cytoplasmic. Residues 454–474 (ILFSAILLCRLTPPICLNFLG) form a helical membrane-spanning segment. Residues 475–502 (MIHMDSHVSMAKSFGVETQFTKLMGHLD) lie on the Extracellular side of the membrane. The helical transmembrane segment at 503-523 (VIPILAKGINIYLPICIILLC) threads the bilayer. Residues 524-644 (AIHYYRVGAY…PSSSGFFDDM (121 aa)) are Cytoplasmic-facing. The segment covering 567 to 576 (SIKRSNERNQ) has biased composition (basic and acidic residues). Residues 567–644 (SIKRSNERNQ…PSSSGFFDDM (78 aa)) are disordered. The span at 578–594 (NQSWTNTITSNTSTTSN) shows a compositional bias: low complexity. Over residues 621–644 (VSSTTRISLSPTEHPSSSGFFDDM) the composition is skewed to polar residues.

This sequence belongs to the LIMR family.

It is found in the cell membrane. May associate with G-protein coupled receptors and regulate downstream signaling pathways. The chain is G-protein coupled receptor-associated protein LMBRD2 from Caenorhabditis briggsae.